A 261-amino-acid chain; its full sequence is Rhomboid-type serine protease 2 (261 aa).

Helical transmembrane passes span 17 to 37 (LTAGLSVFLTLVYVLNWVFPI), 58 to 78 (LYPLAHLSIFHLLLNLMSLFV), 94 to 114 (ITLNLLAIVTGVVYCLVGMLL), 116 to 136 (PNVYVGGASGWCFTLCGYFAV), and 155 to 175 (LYIPLVFLVLVTLLMPGSSFV). Serine 124 functions as the Nucleophile in the catalytic mechanism. Residue histidine 177 is part of the active site.

Belongs to the peptidase S54 family.

The protein resides in the golgi apparatus membrane. Its subcellular location is the golgi apparatus. The protein localises to the cis-Golgi network membrane. It catalyses the reaction Cleaves type-1 transmembrane domains using a catalytic dyad composed of serine and histidine that are contributed by different transmembrane domains.. Functionally, probable rhomboid-type serine protease that catalyzes intramembrane proteolysis. The protein is Rhomboid-type serine protease 2 (RBD2) of Eremothecium gossypii (strain ATCC 10895 / CBS 109.51 / FGSC 9923 / NRRL Y-1056) (Yeast).